Consider the following 340-residue polypeptide: tRNA N6-adenosine threonylcarbamoyltransferase (340 aa).

Fe cation-binding residues include His-115 and His-119. Residues 138-142 (VVSGG), Asp-171, Gly-184, Asp-188, and Asn-278 contribute to the substrate site. Asp-306 is a Fe cation binding site.

It belongs to the KAE1 / TsaD family. It depends on Fe(2+) as a cofactor.

The protein localises to the cytoplasm. The catalysed reaction is L-threonylcarbamoyladenylate + adenosine(37) in tRNA = N(6)-L-threonylcarbamoyladenosine(37) in tRNA + AMP + H(+). Its function is as follows. Required for the formation of a threonylcarbamoyl group on adenosine at position 37 (t(6)A37) in tRNAs that read codons beginning with adenine. Is involved in the transfer of the threonylcarbamoyl moiety of threonylcarbamoyl-AMP (TC-AMP) to the N6 group of A37, together with TsaE and TsaB. TsaD likely plays a direct catalytic role in this reaction. The polypeptide is tRNA N6-adenosine threonylcarbamoyltransferase (Clostridium botulinum (strain Hall / ATCC 3502 / NCTC 13319 / Type A)).